A 92-amino-acid polypeptide reads, in one-letter code: RNA-binding protein Hfq (92 aa).

Positions 9–68 (DPFLNALRRERVPVSVYLVNGIKLQGTIESFDQFVVLLRNTVSQMVYKHAISTVVPARNV) constitute a Sm domain. The interval 72 to 92 (PGGGYVQSNENNQAEDDDVEQ) is disordered.

It belongs to the Hfq family. In terms of assembly, homohexamer.

RNA chaperone that binds small regulatory RNA (sRNAs) and mRNAs to facilitate mRNA translational regulation in response to envelope stress, environmental stress and changes in metabolite concentrations. Also binds with high specificity to tRNAs. The polypeptide is RNA-binding protein Hfq (Xanthomonas campestris pv. campestris (strain 8004)).